Here is a 351-residue protein sequence, read N- to C-terminus: MPTSVTASSSWSQILEMLLEGQNLPEVEATALMEAWLAEQLTPVQTGAFLAALRAKGVTGNELSGMAQVLRGACPLPCPLPDIPMVDTCGTGGDGADTFNISTAVAFTAAACGANVAKHGNRSASGKVGSADVLEGLGLQLKAPLVSVVEALVEVGVTFLFAPAWHPALVNLAPLRRSLGVRTVFNLLGPLVNPLQPNAQVLGVAKAELLNPMAEALQRLGLQRAVVVHGAGGLDEASLEGANAMRLLENGHLRQASIDSAELGLTRAPLQALQGGDLATNQAILSAVLQGGGTAPQRDVVALNTALVLWAAGLQDDLQAGVSTAKTCLQEGLPWQRLEGLRMALDHQIGE.

5-phospho-alpha-D-ribose 1-diphosphate contacts are provided by residues Gly90, 93–94 (GD), Thr98, 100–103 (NIST), 118–126 (KHGNRSASG), and Ser130. An anthranilate-binding site is contributed by Gly90. Ser102 serves as a coordination point for Mg(2+). Position 121 (Asn121) interacts with anthranilate. Arg176 provides a ligand contact to anthranilate. Positions 235 and 236 each coordinate Mg(2+).

This sequence belongs to the anthranilate phosphoribosyltransferase family. As to quaternary structure, homodimer. It depends on Mg(2+) as a cofactor.

The catalysed reaction is N-(5-phospho-beta-D-ribosyl)anthranilate + diphosphate = 5-phospho-alpha-D-ribose 1-diphosphate + anthranilate. It functions in the pathway amino-acid biosynthesis; L-tryptophan biosynthesis; L-tryptophan from chorismate: step 2/5. Catalyzes the transfer of the phosphoribosyl group of 5-phosphorylribose-1-pyrophosphate (PRPP) to anthranilate to yield N-(5'-phosphoribosyl)-anthranilate (PRA). The chain is Anthranilate phosphoribosyltransferase from Prochlorococcus marinus (strain MIT 9313).